Consider the following 405-residue polypeptide: uncharacterized protein (405 aa).

A signal peptide spans 1-20; that stretch reads MKAKLALSIIGLVLASLVAG. An N-acetylcysteine modification is found at Cys21. Cys21 is lipidated: S-archaeol cysteine.

The protein belongs to the BMP lipoprotein family.

The protein resides in the cell membrane. This is an uncharacterized protein from Pyrococcus horikoshii (strain ATCC 700860 / DSM 12428 / JCM 9974 / NBRC 100139 / OT-3).